The primary structure comprises 480 residues: Proline--tRNA ligase (480 aa).

It belongs to the class-II aminoacyl-tRNA synthetase family. ProS type 3 subfamily. Homodimer.

It is found in the cytoplasm. The enzyme catalyses tRNA(Pro) + L-proline + ATP = L-prolyl-tRNA(Pro) + AMP + diphosphate. In terms of biological role, catalyzes the attachment of proline to tRNA(Pro) in a two-step reaction: proline is first activated by ATP to form Pro-AMP and then transferred to the acceptor end of tRNA(Pro). This Metallosphaera sedula (strain ATCC 51363 / DSM 5348 / JCM 9185 / NBRC 15509 / TH2) protein is Proline--tRNA ligase.